We begin with the raw amino-acid sequence, 427 residues long: Transcription termination factor Rho (427 aa).

A Rho RNA-BD domain is found at 55-130; that stretch reads YFFGEGVLEI…IKIEAINYRP (76 aa). Residues 173 to 178, 185 to 190, and arginine 216 each bind ATP; these read GKGQRG and KAGKTT.

This sequence belongs to the Rho family. As to quaternary structure, homohexamer. The homohexamer assembles into an open ring structure.

Facilitates transcription termination by a mechanism that involves Rho binding to the nascent RNA, activation of Rho's RNA-dependent ATPase activity, and release of the mRNA from the DNA template. The protein is Transcription termination factor Rho of Thermotoga maritima (strain ATCC 43589 / DSM 3109 / JCM 10099 / NBRC 100826 / MSB8).